The primary structure comprises 352 residues: UDP-N-acetylglucosamine--N-acetylmuramyl-(pentapeptide) pyrophosphoryl-undecaprenol N-acetylglucosamine transferase (352 aa).

2 residues coordinate UDP-N-acetyl-alpha-D-glucosamine: Ser195 and Gln287.

This sequence belongs to the glycosyltransferase 28 family. MurG subfamily.

It localises to the cell membrane. It catalyses the reaction Mur2Ac(oyl-L-Ala-gamma-D-Glu-L-Lys-D-Ala-D-Ala)-di-trans,octa-cis-undecaprenyl diphosphate + UDP-N-acetyl-alpha-D-glucosamine = beta-D-GlcNAc-(1-&gt;4)-Mur2Ac(oyl-L-Ala-gamma-D-Glu-L-Lys-D-Ala-D-Ala)-di-trans,octa-cis-undecaprenyl diphosphate + UDP + H(+). It functions in the pathway cell wall biogenesis; peptidoglycan biosynthesis. Functionally, cell wall formation. Catalyzes the transfer of a GlcNAc subunit on undecaprenyl-pyrophosphoryl-MurNAc-pentapeptide (lipid intermediate I) to form undecaprenyl-pyrophosphoryl-MurNAc-(pentapeptide)GlcNAc (lipid intermediate II). This is UDP-N-acetylglucosamine--N-acetylmuramyl-(pentapeptide) pyrophosphoryl-undecaprenol N-acetylglucosamine transferase from Streptococcus pneumoniae (strain JJA).